We begin with the raw amino-acid sequence, 335 residues long: 2-keto-3-deoxygluconate permease (335 aa).

Helical transmembrane passes span 10–30 (IPGG…TAAP), 42–62 (GIIT…GASI), 77–97 (LVLT…QLLP), 100–120 (GIEV…AMDM), 141–161 (AFVL…LGSA), 163–183 (LASF…IGFA), 200–220 (QTLI…GVIL), 224–244 (LLGI…LIIA), 254–274 (TAGL…VIIA), and 289–309 (ALVA…TAMY).

The protein belongs to the KdgT transporter family.

The protein resides in the cell inner membrane. The catalysed reaction is 2-dehydro-3-deoxy-D-gluconate(in) + H(+)(in) = 2-dehydro-3-deoxy-D-gluconate(out) + H(+)(out). Catalyzes the proton-dependent uptake of 2-keto-3-deoxygluconate (KDG) into the cell. This chain is 2-keto-3-deoxygluconate permease, found in Tolumonas auensis (strain DSM 9187 / NBRC 110442 / TA 4).